Reading from the N-terminus, the 216-residue chain is Pyrophosphatase PpaX (216 aa).

Catalysis depends on Asp9, which acts as the Nucleophile.

It belongs to the HAD-like hydrolase superfamily. PpaX family. Mg(2+) is required as a cofactor.

The enzyme catalyses diphosphate + H2O = 2 phosphate + H(+). Its function is as follows. Hydrolyzes pyrophosphate formed during P-Ser-HPr dephosphorylation by HPrK/P. Might play a role in controlling the intracellular pyrophosphate pool. In Bacillus cereus (strain Q1), this protein is Pyrophosphatase PpaX.